The chain runs to 340 residues: UPF0324 membrane protein BC_5174 (340 aa).

10 helical membrane passes run 13–35 (FGFS…LAEL), 40–59 (IMGQ…AAIG), 99–118 (VLVI…YGLT), 128–150 (GILT…APQV), 157–179 (TAVG…TLLY), 189–211 (YGVF…APGG), 218–240 (AVIV…GLWF), 255–277 (LPIP…GIIP), 279–301 (VVAG…GLGL), and 316–338 (FVAG…YALG).

This sequence belongs to the UPF0324 family.

The protein localises to the cell membrane. This is UPF0324 membrane protein BC_5174 from Bacillus cereus (strain ATCC 14579 / DSM 31 / CCUG 7414 / JCM 2152 / NBRC 15305 / NCIMB 9373 / NCTC 2599 / NRRL B-3711).